The following is a 289-amino-acid chain: MSLDKRIESALVKALSPEALGESPPLLAAALPYGVFPGGARIRPTILVSVALACGDDCPAVTDAAAVALELMHCASLVHDDLPAFDNADIRRGKPSLHKAYNEPLAVLAGDSLLIRGFEVLADVGAVNPDRALKLISKLGQLSGARGGICAGQAWESESKVDLAAYHQAKTGALFIAATQMGAIAAGYEAEPWFDLGMRIGSAFQIADDLKDALMSAEAMGKPAGQDIANERPNAVKTMGIEGARKHLQDVLAGAIASIPSCPGEAKLAQMVQLYAHKIMDIPASAERG.

2 residues coordinate isopentenyl diphosphate: arginine 43 and histidine 73. The Mg(2+) site is built by aspartate 80 and aspartate 86. Arginine 91 is a binding site for (2E,6E)-farnesyl diphosphate. Position 92 (arginine 92) interacts with isopentenyl diphosphate. Lysine 170, threonine 171, and glutamine 205 together coordinate (2E,6E)-farnesyl diphosphate.

The protein belongs to the FPP/GGPP synthase family. It depends on Mg(2+) as a cofactor.

The enzyme catalyses isopentenyl diphosphate + (2E,6E)-farnesyl diphosphate = (2E,6E,10E)-geranylgeranyl diphosphate + diphosphate. It participates in isoprenoid biosynthesis; geranylgeranyl diphosphate biosynthesis; geranylgeranyl diphosphate from farnesyl diphosphate and isopentenyl diphosphate: step 1/1. In terms of biological role, catalyzes the condensation of farnesyl diphosphate (FPP) and isopentenyl diphosphate (IPP) to yield geranylgeranyl diphosphate (GGPP) needed for biosynthesis of carotenoids and diterpenes. This Rhodobacter capsulatus (strain ATCC BAA-309 / NBRC 16581 / SB1003) protein is Geranylgeranyl diphosphate synthase (crtE).